The following is a 79-amino-acid chain: Major outer membrane lipoprotein Lpp 3 (79 aa).

Positions 1 to 21 are cleaved as a signal peptide; sequence MNRTNKLILGAVVLGSALLAG. Cysteine 22 is lipidated: N-palmitoyl cysteine. Residue cysteine 22 is the site of S-diacylglycerol cysteine attachment. 2 repeats span residues 25–35 and 39–49; these read NAKIDQLSSDV and SAKVDQLSNDV. A coiled-coil region spans residues 28–76; it reads IDQLSSDVQTLSAKVDQLSNDVNAMRSDVQAAKDDAARANQRLDNKVLR. Lysine 79 carries the N6-murein peptidoglycan lysine modification.

This sequence belongs to the Lpp family. As to quaternary structure, homotrimer.

It localises to the cell outer membrane. The protein localises to the secreted. The protein resides in the cell wall. A highly abundant outer membrane lipoprotein that controls the distance between the inner and outer membranes. The only protein known to be covalently linked to the peptidoglycan network (PGN). Also non-covalently binds the PGN. The link between the cell outer membrane and PGN contributes to maintenance of the structural and functional integrity of the cell envelope, and maintains the correct distance between the PGN and the outer membrane. This Salmonella paratyphi A (strain ATCC 9150 / SARB42) protein is Major outer membrane lipoprotein Lpp 3.